The primary structure comprises 171 residues: Sorcin (171 aa).

EF-hand domains are found at residues methionine 3 to threonine 38, leucine 40 to phenylalanine 69, lysine 70 to histidine 105, and leucine 106 to leucine 140. Residues aspartate 16, aspartate 18, serine 20, serine 22, glutamate 27, aspartate 53, aspartate 55, asparagine 57, threonine 59, glutamate 64, aspartate 83, aspartate 85, serine 87, serine 89, and glutamate 94 each coordinate Ca(2+).

It localises to the cytoplasm. Functionally, calcium-binding protein. This is Sorcin from Schistosoma japonicum (Blood fluke).